The sequence spans 80 residues: Small ribosomal subunit protein bS18 (80 aa).

This sequence belongs to the bacterial ribosomal protein bS18 family. As to quaternary structure, part of the 30S ribosomal subunit. Forms a tight heterodimer with protein bS6.

Functionally, binds as a heterodimer with protein bS6 to the central domain of the 16S rRNA, where it helps stabilize the platform of the 30S subunit. The polypeptide is Small ribosomal subunit protein bS18 (Staphylococcus epidermidis (strain ATCC 35984 / DSM 28319 / BCRC 17069 / CCUG 31568 / BM 3577 / RP62A)).